We begin with the raw amino-acid sequence, 428 residues long: Enolase (428 aa).

Position 163 (Gln-163) interacts with (2R)-2-phosphoglycerate. Glu-205 functions as the Proton donor in the catalytic mechanism. Mg(2+) contacts are provided by Asp-242, Glu-285, and Asp-312. The (2R)-2-phosphoglycerate site is built by Lys-337, Arg-366, Ser-367, and Lys-388. Lys-337 functions as the Proton acceptor in the catalytic mechanism.

It belongs to the enolase family. Mg(2+) is required as a cofactor.

The protein localises to the cytoplasm. The protein resides in the secreted. It is found in the cell surface. The enzyme catalyses (2R)-2-phosphoglycerate = phosphoenolpyruvate + H2O. The protein operates within carbohydrate degradation; glycolysis; pyruvate from D-glyceraldehyde 3-phosphate: step 4/5. Functionally, catalyzes the reversible conversion of 2-phosphoglycerate (2-PG) into phosphoenolpyruvate (PEP). It is essential for the degradation of carbohydrates via glycolysis. The chain is Enolase from Carboxydothermus hydrogenoformans (strain ATCC BAA-161 / DSM 6008 / Z-2901).